A 1065-amino-acid chain; its full sequence is Putative guanine nucleotide-exchange factor SED4 (1065 aa).

The Cytoplasmic segment spans residues 1 to 346 (MSGNSANYDV…SSSILRNIWK (346 aa)). Ser-65 carries the phosphoserine modification. WD repeat units lie at residues 259 to 298 (FDLN…LVQL) and 302 to 341 (VHES…SSIL). A helical; Signal-anchor for type II membrane protein membrane pass occupies residues 347-365 (FFLNFVLLVVLAGAIQLGY). At 366–1065 (KHNVHGFIYK…VNYAGLHDEL (700 aa)) the chain is on the lumenal side. Residue Asn-388 is glycosylated (N-linked (GlcNAc...) asparagine). 3 disordered regions span residues 458 to 477 (TSAD…SSSF), 482 to 520 (VTNE…SESI), and 551 to 625 (QSES…SFLD). Residues 465–476 (SASSSSSSSSSS) show a composition bias toward low complexity. Residues 482 to 495 (VTNEPIVSSPTSEI) are compositionally biased toward polar residues. Over residues 568-621 (STESPSLSHMPSSSSSSLSLSSSLTTSPTTALSTSTATAVTTTQTNPTNDAANT) the composition is skewed to low complexity. Asn-620 is a glycosylation site (N-linked (GlcNAc...) asparagine). 4 tandem repeats follow at residues 824–833 (IDNSEYTSVL), 834–843 (ADNLEPTSVL), 844–853 (ADNSEPTSVL), and 854–863 (ADSSEPTSVF). The interval 824–863 (IDNSEYTSVLADNLEPTSVLADNSEPTSVLADSSEPTSVF) is 4 X 10 AA tandem repeats. Asn-1039 carries an N-linked (GlcNAc...) asparagine glycan. The Prevents secretion from ER signature appears at 1062–1065 (HDEL).

Belongs to the WD repeat SEC12 family.

It localises to the endoplasmic reticulum membrane. It is found in the golgi apparatus membrane. Its function is as follows. Putative guanine nucleotide-exchange factor (GEF) involved in the formation or budding of transport vesicles from the ER. Positive regulator of SAR1 probably through inhibition of the GTPase activation by SEC23. The chain is Putative guanine nucleotide-exchange factor SED4 (SED4) from Saccharomyces cerevisiae (strain ATCC 204508 / S288c) (Baker's yeast).